The sequence spans 93 residues: Small ribosomal subunit protein uS19 (93 aa).

It belongs to the universal ribosomal protein uS19 family.

Its function is as follows. Protein S19 forms a complex with S13 that binds strongly to the 16S ribosomal RNA. The protein is Small ribosomal subunit protein uS19 of Oleidesulfovibrio alaskensis (strain ATCC BAA-1058 / DSM 17464 / G20) (Desulfovibrio alaskensis).